A 986-amino-acid chain; its full sequence is Anoctamin-1 (986 aa).

At 1–333 (MRVNEKYSTL…FGEKIGLYFA (333 aa)) the chain is on the cytoplasmic side. Residues 79–121 (LVRRVQHSDTPSGARSVKQDHPLPGKGASLDAGSGEPPMDYHE) form a disordered region. Residues serine 107 and serine 196 each carry the phosphoserine modification. The chain crosses the membrane as a helical span at residues 334–354 (WLGVYTQMLIPASIVGIIVFL). Topologically, residues 355-406 (YGCATMDENIPSMEMCDQRHNITMCPLCDKTCSYWKMSSACATARASHLFDN) are extracellular. 4 cysteine pairs are disulfide-bonded: cysteine 370–cysteine 395, cysteine 379–cysteine 862, cysteine 382–cysteine 386, and cysteine 651–cysteine 656. Residues 407–427 (PATVFFSVFMALWAATFMEHW) form a helical membrane-spanning segment. Glutamate 425 serves as a coordination point for Ca(2+). Over 428-519 (KRKQMRLNYR…RDRFPAYLTN (92 aa)) the chain is Cytoplasmic. Residues 520–540 (LVSIIFMIAVTFAIVLGVIIY) traverse the membrane as a helical segment. Topologically, residues 541–568 (RISMAAALAMNSSPSVRSNIRVTVTATA) are extracellular. Residues 569–589 (VIINLVVIILLDEVYGCIARW) traverse the membrane as a helical segment. The Cytoplasmic segment spans residues 590–607 (LTKIEVPKTEKSFEERLI). The chain crosses the membrane as a helical span at residues 608 to 628 (FKAFLLKFVNSYTPIFYVAFF). At 629-657 (KGRFVGRPGDYVYIFRSFRMEECAPGGCL) the chain is on the extracellular side. Residues 658–678 (MELCIQLSIIMLGKQLIQNNL) form a helical membrane-spanning segment. Ca(2+) is bound by residues asparagine 677, glutamate 680, glutamate 728, glutamate 731, glutamate 760, and aspartate 764. The Cytoplasmic portion of the chain corresponds to 679–725 (FEIGIPKMKKLIRYLKLKQQSPPDHEECVKRKQRYEVDYNLEPFAGL). Transmembrane regions (helical) follow at residues 726 to 746 (TPEY…VASF) and 747 to 767 (PLAP…DAKK). At 768–784 (FVTELRRPVAVRAKDIG) the chain is on the cytoplasmic side. Residues 785 to 805 (IWYNILRGIGKLAVIINAFVI) form a helical membrane-spanning segment. The Extracellular portion of the chain corresponds to 806–892 (SFTSDFIPRL…FWAVLAARLA (87 aa)). Asparagine 832 is a glycosylation site (N-linked (GlcNAc...) asparagine). Residues 893–913 (FVIVFQNLVMFMSDFVDWVIP) traverse the membrane as a helical segment. Ca(2+)-binding residues include aspartate 909 and aspartate 914. Over 914-986 (DIPKDISQQI…PSHAYHGGVL (73 aa)) the chain is Cytoplasmic. The span at 951–960 (KERQKDEPPC) shows a compositional bias: basic and acidic residues. A disordered region spans residues 951-986 (KERQKDEPPCNHHNTKACPDSLGSPAPSHAYHGGVL).

Belongs to the anoctamin family. Homodimer. Interacts with CFTR. Interacts with TRPV4. Expressed in nasal epithelial cells (at protein level). In the kidney, expressed in the collecting duct (at protein level). Broadly expressed with higher levels in liver, skeletal muscle and gastrointestinal muscles. Expressed in eccrine sweat glands.

It is found in the apical cell membrane. The protein localises to the presynapse. It carries out the reaction chloride(in) = chloride(out). With respect to regulation, ATP and calmodulin are essential for its activation. Channel activity is inhibited by CFTR protein and by chloride inhibitors such as niflumic acid (NFA) and 4,4'-diisothiocyanatostilbene-2,2'-disulfonic acid (DIDS). Activated by heat with activation seen at temperatures above 44 degrees Celsius. Activated by BDNF in radial glial cells. In terms of biological role, calcium-activated chloride channel (CaCC). Plays a role in transepithelial anion transport and smooth muscle contraction. Required for the normal functioning of the interstitial cells of Cajal (ICCs) which generate electrical pacemaker activity in gastrointestinal smooth muscles. Acts as a major contributor to basal and stimulated chloride conductance in airway epithelial cells and plays an important role in tracheal cartilage development. Required for CFTR activation by enhancing endoplasmic reticulum Ca(2+) store release and is also required for CFTR membrane expression. Required for basal and ATP-dependent mucus secretion in airways and intestine, probably by controlling exocytosis of mucus-filled granules by providing Ca(2+) to an apical signaling compartment. Contributes to airway mucus expression induced by interleukins IL3 and IL8 and by the asthma-associated protein CLCA1 and is required for expression of mucin MUC5AC. However, was shown in another study not to be required for MUC5AC expression. Plays a role in the propagation of Ca(2+) waves in Kolliker's organ in the cochlea and contributes to the refinement of auditory brainstem circuitries prior to hearing onset. In vomeronasal sensory neurons, modulates spontaneous firing patterns in the absence of stimuli as well as the firing pattern of pheromone-evoked activity. Responsible for calcium-activated chloride channel activity in type I taste cells of the vallate papillae. Acts as a heat sensor in nociceptive neurons. In dorsal root ganglion neurons, plays a role in mediating non-histaminergic Mas-related G-protein coupled receptor (MRGPR)-dependent itching, acting as a downstream effector of MRGPRs. In the developing brain, required for the Ca(2+)-dependent process extension of radial glial cells. Calcium-activated chloride channel (CaCC). Contributes to calcium-activated chloride secretion in human sweat gland epithelial cells. Shows increased basal chloride permeability and decreased Ca(2+)-induced chloride permeability. Its function is as follows. Calcium-activated chloride channel (CaCC). Shows increased sensitivity to intracellular Ca(2+). This Homo sapiens (Human) protein is Anoctamin-1 (ANO1).